The following is a 741-amino-acid chain: HSP-interacting protein (741 aa).

TPR repeat units follow at residues 26 to 59 (SREL…LPAG), 65 to 100 (AHLR…VPRY), and 102 to 134 (RALL…EPGN). The tract at residues 168-270 (ASAKGEERKK…GESKQQKHSA (103 aa)) is disordered. Residues 171 to 184 (KGEERKKSRNKRFD) are compositionally biased toward basic and acidic residues. The segment covering 201–218 (SASTEKQAGPRQTNGTGN) has biased composition (polar residues). Over residues 219–247 (HQDHTEDSESNGLEKLEQSTETGEKDMGK) the composition is skewed to basic and acidic residues. Residues 248–258 (KRGAHAAGKKP) show a composition bias toward basic residues. In terms of domain architecture, PB1 spans 285-364 (MKDVKLVFGE…VPIRFYVVEV (80 aa)). TPR repeat units follow at residues 496-530 (EFIL…KSDF), 532-557 (EGLI…ACKI), 558-591 (NMET…RLKG), and 628-663 (SHIN…AMEK).

In terms of assembly, interacts (via C-terminus) with O1. Interacts (via C-terminus) with OP10 (via N-terminus).

Its function is as follows. Acts as a co-chaperone for HSP90 and is required for proper folding of the myosin motor domain. The protein is HSP-interacting protein of Zea mays (Maize).